The sequence spans 329 residues: Glycerol-3-phosphate dehydrogenase [NAD(P)+] (329 aa).

NADPH contacts are provided by W11, R30, and K103. Sn-glycerol 3-phosphate contacts are provided by K103, G132, and S134. A136 is an NADPH binding site. 5 residues coordinate sn-glycerol 3-phosphate: K187, D240, S250, R251, and N252. Residue K187 is the Proton acceptor of the active site. R251 contributes to the NADPH binding site. 2 residues coordinate NADPH: V275 and E277.

It belongs to the NAD-dependent glycerol-3-phosphate dehydrogenase family.

The protein localises to the cytoplasm. It catalyses the reaction sn-glycerol 3-phosphate + NAD(+) = dihydroxyacetone phosphate + NADH + H(+). The enzyme catalyses sn-glycerol 3-phosphate + NADP(+) = dihydroxyacetone phosphate + NADPH + H(+). It functions in the pathway membrane lipid metabolism; glycerophospholipid metabolism. In terms of biological role, catalyzes the reduction of the glycolytic intermediate dihydroxyacetone phosphate (DHAP) to sn-glycerol 3-phosphate (G3P), the key precursor for phospholipid synthesis. The polypeptide is Glycerol-3-phosphate dehydrogenase [NAD(P)+] (Nitrosomonas eutropha (strain DSM 101675 / C91 / Nm57)).